We begin with the raw amino-acid sequence, 223 residues long: Probable amino-acid ABC transporter permease protein PatM (223 aa).

An ABC transmembrane type-1 domain is found at 19-210; it reads LGTTMEMATW…GVVVILTRVQ (192 aa). 5 consecutive transmembrane segments (helical) span residues 23–43, 59–78, 90–110, 156–176, and 186–206; these read MEMATWGLVFSLILSVILANI, ISFFRGTPLLVQLFLLYYGL, AFSAAVIGLTLHFAAYMAESI, FIDMIKSTSLAFTLGVAEIMA, and FRFFEAFLAVALIYWGVVVIL.

The protein belongs to the binding-protein-dependent transport system permease family. HisMQ subfamily.

It is found in the cell inner membrane. Its function is as follows. Probably part of a binding-protein-dependent transport system for an amino acid. Probably responsible for the translocation of the substrate across the membrane. The chain is Probable amino-acid ABC transporter permease protein PatM (patM) from Vibrio harveyi (Beneckea harveyi).